The sequence spans 235 residues: Sugar fermentation stimulation protein homolog (235 aa).

Belongs to the SfsA family.

This is Sugar fermentation stimulation protein homolog from Pseudomonas aeruginosa (strain LESB58).